Consider the following 223-residue polypeptide: NAD(P)H-hydrate epimerase (223 aa).

The region spanning 9-211 (AIKLDEELMG…ELKDKLHLIL (203 aa)) is the YjeF N-terminal domain. (6S)-NADPHX is bound at residue 60–64 (NNGGD). N61 and D120 together coordinate K(+). Residues 124–130 (GFSFKGP) and D153 each bind (6S)-NADPHX. S156 contacts K(+).

Belongs to the NnrE/AIBP family. K(+) is required as a cofactor.

It catalyses the reaction (6R)-NADHX = (6S)-NADHX. It carries out the reaction (6R)-NADPHX = (6S)-NADPHX. In terms of biological role, catalyzes the epimerization of the S- and R-forms of NAD(P)HX, a damaged form of NAD(P)H that is a result of enzymatic or heat-dependent hydration. This is a prerequisite for the S-specific NAD(P)H-hydrate dehydratase to allow the repair of both epimers of NAD(P)HX. This is NAD(P)H-hydrate epimerase from Entamoeba histolytica (strain ATCC 30459 / HM-1:IMSS / ABRM).